The following is a 28-amino-acid chain: leu operon leader peptide (28 aa).

Functionally, involved in control of the biosynthesis of leucine. This is leu operon leader peptide (leuL) from Salmonella typhi.